Here is a 154-residue protein sequence, read N- to C-terminus: Gene 35 protein (154 aa).

The segment at 116-137 (LTAAQDDPVEGGPEPADVADTI) is disordered.

Belongs to the herpesviridae UL96 family.

This is Gene 35 protein (35) from Equus caballus (Horse).